A 672-amino-acid polypeptide reads, in one-letter code: tRNA 5-methylaminomethyl-2-thiouridine biosynthesis bifunctional protein MnmC (672 aa).

The tRNA (mnm(5)s(2)U34)-methyltransferase stretch occupies residues 1–243 (MTSIKNAELG…KREMIAGSME (243 aa)). An FAD-dependent cmnm(5)s(2)U34 oxidoreductase region spans residues 269-672 (IGGGIASAAL…LRKGKAITEL (404 aa)).

In the N-terminal section; belongs to the methyltransferase superfamily. tRNA (mnm(5)s(2)U34)-methyltransferase family. It in the C-terminal section; belongs to the DAO family. Requires FAD as cofactor.

It is found in the cytoplasm. It catalyses the reaction 5-aminomethyl-2-thiouridine(34) in tRNA + S-adenosyl-L-methionine = 5-methylaminomethyl-2-thiouridine(34) in tRNA + S-adenosyl-L-homocysteine + H(+). In terms of biological role, catalyzes the last two steps in the biosynthesis of 5-methylaminomethyl-2-thiouridine (mnm(5)s(2)U) at the wobble position (U34) in tRNA. Catalyzes the FAD-dependent demodification of cmnm(5)s(2)U34 to nm(5)s(2)U34, followed by the transfer of a methyl group from S-adenosyl-L-methionine to nm(5)s(2)U34, to form mnm(5)s(2)U34. The protein is tRNA 5-methylaminomethyl-2-thiouridine biosynthesis bifunctional protein MnmC of Vibrio campbellii (strain ATCC BAA-1116).